An 853-amino-acid chain; its full sequence is Stachyose synthase (853 aa).

A propeptide spanning residues Met1–Asn11 is cleaved from the precursor.

Belongs to the glycosyl hydrolases 36 family.

Its subcellular location is the cytoplasm. The enzyme catalyses alpha-D-galactosyl-(1-&gt;3)-1D-myo-inositol + raffinose = stachyose + myo-inositol. Its pathway is glycan metabolism; stachyose biosynthesis; stachyose from raffinose: step 1/1. In terms of biological role, catalyzes stachyose synthesis by transfer of a galactosyl moiety from galactinol to raffinose. Also catalyzes verbascose synthesis by galactosyl transfer from galactinol to stachyose or from one stachyose molecule to another. Oligosaccharides of the raffinose family play a protective role in maturation drying of seeds. They may act as cryoprotectants in frost-hardy plants. This chain is Stachyose synthase (STS1), found in Pisum sativum (Garden pea).